Consider the following 449-residue polypeptide: PGL/p-HBAD biosynthesis rhamnosyltransferase (449 aa).

It belongs to the glycosyltransferase 28 family.

Its function is as follows. Catalyzes the transfer of the first rhamnosyl residue on p-hydroxybenzoic acid or phenolphthiocerol derivatives to form, after O-methylation at position 2 of the sugar unit, mono-O-methyl-glycosyl-p-hydroxybenzoic acid derivative (p-HBAD I) and 2-O-methyl-rhamnosyl-phenolphthiocerol dimycocerosate (also called mycoside B) during p-hydroxybenzoic acid derivatives (p-HBAD) and glycosylated phenolphthiocerol dimycocerosates (PGL) biosynthesis. In Mycobacterium bovis (strain BCG / Pasteur 1173P2), this protein is PGL/p-HBAD biosynthesis rhamnosyltransferase.